Consider the following 365-residue polypeptide: DNA replication and repair protein RecF (365 aa).

30–37 is a binding site for ATP; the sequence is GRNAQGKT.

Belongs to the RecF family.

It localises to the cytoplasm. The RecF protein is involved in DNA metabolism; it is required for DNA replication and normal SOS inducibility. RecF binds preferentially to single-stranded, linear DNA. It also seems to bind ATP. In Streptococcus pneumoniae serotype 2 (strain D39 / NCTC 7466), this protein is DNA replication and repair protein RecF.